The following is a 342-amino-acid chain: Large ribosomal subunit protein uL10 (342 aa).

Positions 212–342 are required for interaction with ribosomal protein L12 dimers; that stretch reads EYIDMLQKAY…ALAGLSALFG (131 aa). The span at 299–308 shows a compositional bias: polar residues; sequence QAQVAVATQP. The segment at 299 to 342 is disordered; that stretch reads QAQVAVATQPSEEEKKEEEKTEEEEKEEEASEEEALAGLSALFG. Positions 318–333 are enriched in acidic residues; it reads KTEEEEKEEEASEEEA.

It belongs to the universal ribosomal protein uL10 family. Part of the 50S ribosomal subunit, binds large rRNA. Forms the ribosomal stalk which helps the ribosome interact with GTP-bound translation factors. Forms a heptameric L10(L12)2(L12)2(L12)2 complex, where L10 forms an elongated spine to which the L12 dimers bind in a sequential fashion.

Forms the large subunit's ribosomal stalk, playing a central role in the interaction of the ribosome with elongation factors; the stalk complex of P.horikoshii binds to E.coli large subunits and confers on them the ability to interact with eukaryotic elongation factors. Each succesive L12 dimer bound along the P0 spine increases the GTPase activity of elongation factors and increases translation by reconsituted ribosomes, although the first site is the most stimulatory. The chain is Large ribosomal subunit protein uL10 from Pyrococcus horikoshii (strain ATCC 700860 / DSM 12428 / JCM 9974 / NBRC 100139 / OT-3).